Consider the following 293-residue polypeptide: 4-hydroxy-tetrahydrodipicolinate synthase (293 aa).

Pyruvate is bound at residue Thr-45. Tyr-133 (proton donor/acceptor) is an active-site residue. Lys-161 (schiff-base intermediate with substrate) is an active-site residue. Ile-203 contacts pyruvate.

This sequence belongs to the DapA family. In terms of assembly, homotetramer; dimer of dimers.

It localises to the cytoplasm. It catalyses the reaction L-aspartate 4-semialdehyde + pyruvate = (2S,4S)-4-hydroxy-2,3,4,5-tetrahydrodipicolinate + H2O + H(+). Its pathway is amino-acid biosynthesis; L-lysine biosynthesis via DAP pathway; (S)-tetrahydrodipicolinate from L-aspartate: step 3/4. Catalyzes the condensation of (S)-aspartate-beta-semialdehyde [(S)-ASA] and pyruvate to 4-hydroxy-tetrahydrodipicolinate (HTPA). The protein is 4-hydroxy-tetrahydrodipicolinate synthase of Aliivibrio fischeri (strain MJ11) (Vibrio fischeri).